We begin with the raw amino-acid sequence, 105 residues long: Small ribosomal subunit protein uS10 (105 aa).

This sequence belongs to the universal ribosomal protein uS10 family. Part of the 30S ribosomal subunit.

Functionally, involved in the binding of tRNA to the ribosomes. The chain is Small ribosomal subunit protein uS10 from Francisella philomiragia subsp. philomiragia (strain ATCC 25017 / CCUG 19701 / FSC 153 / O#319-036).